A 254-amino-acid chain; its full sequence is Alcohol dehydrogenase (254 aa).

Phe-10 to Leu-33 provides a ligand contact to NAD(+). Ser-138 is a binding site for substrate. Tyr-151 (proton acceptor) is an active-site residue.

It belongs to the short-chain dehydrogenases/reductases (SDR) family. In terms of assembly, homodimer.

The catalysed reaction is a primary alcohol + NAD(+) = an aldehyde + NADH + H(+). It carries out the reaction a secondary alcohol + NAD(+) = a ketone + NADH + H(+). In Drosophila nigra (Fruit fly), this protein is Alcohol dehydrogenase (Adh).